Reading from the N-terminus, the 131-residue chain is Major pollen allergen Pla l 1 (131 aa).

Cystine bridges form between Cys17/Cys86, Cys20/Cys131, and Cys42/Cys74. Zn(2+)-binding residues include His21, Asp45, Asp73, and Glu88. Asn107 carries N-linked (GlcNAc...) asparagine glycosylation.

Belongs to the Ole e I family. Exists in two variants: glycosylated and non-glycosylated. Carries a complex, major N-linked glycan, with a alpha-1,3-fucose residue in its structure and probably also a beta-1,2-xylose. The average modification of molecular mass due to glycosylation is approximately 969 Da.

The protein resides in the secreted. The protein is Major pollen allergen Pla l 1 of Plantago lanceolata (English plantain).